The chain runs to 345 residues: MTSGAWLVARPAAIEIAALLFAFTLGYLVKYTINYQSVVSQAIDHYGYGYERTSHEGIGGSNGKIPDCPYSYVISLYGHNHFSPLVDFLHPTLKHKYPKKHSLILDIMDAVHLCLIMVDDICDHSPKRKNHTTAHLLYGSCETANRAYFVLTKVINRAMKEQPVLGIELLRALELILEGQDMSLVWRRDGLRSFESYGEESLLTYKNMALLKTGTLFVLLGRLLNQGGHQSDDLLGRFGWYAQLQNDCKNIYSEEYAFNKGTVAEDLRNRELSFPVVVALNDKHTEPQIRKAFQSQNQGDIKRALQALESPSVKNTCLKTLQEAGQGLENLVAVWGRKEQMHFTK.

Histidine 112 lines the substrate pocket. The Mg(2+) site is built by aspartate 119 and aspartate 123. Arginine 128 provides a ligand contact to substrate. Asparagine 130 carries an N-linked (GlcNAc...) asparagine glycan. Positions 212, 213, 243, 250, and 260 each coordinate substrate.

It belongs to the FPP/GGPP synthase family. The cofactor is Mg(2+).

The protein operates within secondary metabolite biosynthesis. In terms of biological role, prenyltransferase; part of the gene cluster that mediates the biosynthesis of lolitrems, indole-diterpene mycotoxins that are potent tremorgens in mammals, and are synthesized by clavicipitaceous fungal endophytes in association with their grass hosts. The geranylgeranyl diphosphate (GGPP) synthase ltmG is proposed to catalyze the first step in lolitrem biosynthesis. LtmG catalyzes a series of iterative condensations of isopentenyl diphosphate (IPP) with dimethylallyl diphosphate (DMAPP), geranyl diphosphate (GPP), and farnesyl diphosphate (FPP), to form GGPP. GGPP then condenses with indole-3-glycerol phosphate to form 3-geranylgeranylindole, an acyclic intermediate, to be incorporated into paxilline. Either ltmG or ltmC could be responsible for this step, as both are putative prenyl transferases. The FAD-dependent monooxygenase ltmM then catalyzes the epoxidation of the two terminal alkenes of the geranylgeranyl moiety, which is subsequently cyclized by ltmB, to paspaline. The cytochrome P450 monooxygenases ltmQ and ltmP can sequentially oxidize paspaline to terpendole E and terpendole F. Alternatively, ltmP converts paspaline to an intermediate which is oxidized by ltmQ to terpendole F. LtmF, ltmK, ltmE and ltmJ appear to be unique to the epichloe endophytes. The prenyltransferase ltmF is involved in the 27-hydroxyl-O-prenylation. The cytochrome P450 monooxygenase ltmK is required for the oxidative acetal ring formation. The multi-functional prenyltransferase ltmE is required for C20- and C21-prenylations of the indole ring of paspalanes and acts together with the cytochrome P450 monooxygenase ltmJ to yield lolitremanes by multiple oxidations and ring closures. The stereoisomer pairs of lolitriol and lolitrem N or lolitrem B and lolitrem F may be attributed to variations in the way in which ring closure can occur under the action of ltmJ. While the major product of this pathway is lolitrem B, the prenyl transferases and cytochrome P450 monooxygenases identified in this pathway have a remarkable versatility in their regio- and stereo-specificities to generate a diverse range of metabolites that are products of a metabolic grid rather than a linear pathway. This is Prenyltransferase ltmC from Epichloe festucae var. lolii (Neotyphodium lolii).